The sequence spans 132 residues: Large ribosomal subunit protein uL22c (132 aa).

Belongs to the universal ribosomal protein uL22 family. As to quaternary structure, part of the 50S ribosomal subunit.

The protein resides in the plastid. It localises to the chloroplast. Functionally, this protein binds specifically to 23S rRNA. In terms of biological role, the globular domain of the protein is located near the polypeptide exit tunnel on the outside of the subunit, while an extended beta-hairpin is found that lines the wall of the exit tunnel in the center of the 70S ribosome. The chain is Large ribosomal subunit protein uL22c (rpl22) from Staurastrum punctulatum (Green alga).